We begin with the raw amino-acid sequence, 345 residues long: Probable aldo-keto reductase 3 (345 aa).

Tyr63 functions as the Proton donor in the catalytic mechanism. Residue His130 coordinates substrate. An NADP(+)-binding site is contributed by 209–219 (SPLGRGFFASG).

Belongs to the aldo/keto reductase family.

The sequence is that of Probable aldo-keto reductase 3 from Arabidopsis thaliana (Mouse-ear cress).